The following is a 156-amino-acid chain: Small ribosomal subunit protein uS7 (156 aa).

This sequence belongs to the universal ribosomal protein uS7 family. In terms of assembly, part of the 30S ribosomal subunit. Contacts proteins S9 and S11.

In terms of biological role, one of the primary rRNA binding proteins, it binds directly to 16S rRNA where it nucleates assembly of the head domain of the 30S subunit. Is located at the subunit interface close to the decoding center, probably blocks exit of the E-site tRNA. The protein is Small ribosomal subunit protein uS7 of Bacillus mycoides (strain KBAB4) (Bacillus weihenstephanensis).